A 276-amino-acid chain; its full sequence is N-acyl homoserine lactonase AiiB (276 aa).

Positions 111, 113, 116, 191, 213, and 259 each coordinate Zn(2+).

The protein belongs to the metallo-beta-lactamase superfamily. The cofactor is Zn(2+).

The catalysed reaction is an N-acyl-L-homoserine lactone + H2O = an N-acyl-L-homoserine + H(+). This Rhizobium rhizogenes (strain K84 / ATCC BAA-868) (Agrobacterium radiobacter) protein is N-acyl homoserine lactonase AiiB.